The chain runs to 208 residues: Cysteine-rich protein 2 (208 aa).

The LIM zinc-binding 1 domain occupies 5 to 57; that stretch reads CPKCDKTVYFAEKVSSLGKDWHKFCLKCERCNKTLTPGGHAEHDGKPFCHKPC. N6-acetyllysine is present on K23. Residue S104 is modified to Phosphoserine. The LIM zinc-binding 2 domain occupies 126 to 178; it reads CPRCNKRVYFAEKVTSLGKDWHRPCLRCERCSKTLTPGGHAEHDGQPYCHKPC. Residues K138 and K144 each carry the N6-acetyllysine modification.

As to quaternary structure, interacts with TGFB1I1. In terms of tissue distribution, expressed more abundantly in liver and kidney of females than that of males. Equally expressed in brain, lung and heart.

This Rattus norvegicus (Rat) protein is Cysteine-rich protein 2 (Crip2).